The sequence spans 360 residues: Iron uptake protein A1 (360 aa).

The N-terminal stretch at M1–S28 is a signal peptide. C29 is lipidated: N-palmitoyl cysteine. The S-diacylglycerol cysteine moiety is linked to residue C29. The Fe cation site is built by H54, Y55, Y185, Y241, and Y242.

Belongs to the bacterial solute-binding protein 1 family.

Its subcellular location is the cellular thylakoid membrane. The protein localises to the cell membrane. Functionally, plays an important role in protecting the acceptor side of photosystem II (PSII) against oxidative damage, especially under iron-limiting growth conditions. The differing subcellular locations of futA1 (predominantly thylakoid lumen) and futA2 (predominantly periplasmic) suggest they may fulfill different roles. A major iron-binding protein involved in Fe(3+) uptake, probably part of a periplasmic ABC transporter complex futA1A2BC (TC 3.A.1.10.2) involved in Fe(3+) ion import (ferric iron). This protein and futA2 (slr0531) may be subunit proteins that have redundant or overlapping substrate-binding functions. In Synechocystis sp. (strain ATCC 27184 / PCC 6803 / Kazusa), this protein is Iron uptake protein A1 (futA1).